The following is a 158-amino-acid chain: Protein-export protein SecB (158 aa).

This sequence belongs to the SecB family. In terms of assembly, homotetramer, a dimer of dimers. One homotetramer interacts with 1 SecA dimer.

The protein resides in the cytoplasm. Its function is as follows. One of the proteins required for the normal export of preproteins out of the cell cytoplasm. It is a molecular chaperone that binds to a subset of precursor proteins, maintaining them in a translocation-competent state. It also specifically binds to its receptor SecA. This Photorhabdus laumondii subsp. laumondii (strain DSM 15139 / CIP 105565 / TT01) (Photorhabdus luminescens subsp. laumondii) protein is Protein-export protein SecB.